The chain runs to 85 residues: UPF0335 protein BARBAKC583_0130 (85 aa).

This sequence belongs to the UPF0335 family.

This is UPF0335 protein BARBAKC583_0130 from Bartonella bacilliformis (strain ATCC 35685 / KC583 / Herrer 020/F12,63).